The sequence spans 314 residues: Deacetoxycephalosporin C synthase (314 aa).

The Fe2OG dioxygenase domain maps to 156–269; that stretch reads DCEPLLRLRY…RTSSVFFLRP (114 aa).

The protein belongs to the iron/ascorbate-dependent oxidoreductase family. Fe cation serves as cofactor. L-ascorbate is required as a cofactor.

The catalysed reaction is penicillin N + 2-oxoglutarate + O2 = deacetoxycephalosporin C + succinate + CO2 + H2O. The protein operates within antibiotic biosynthesis; cephalosporin C biosynthesis. Functionally, catalyzes the step from penicillin N to deacetoxy-cephalosporin C. The chain is Deacetoxycephalosporin C synthase (cefE) from Amycolatopsis lactamdurans (Nocardia lactamdurans).